The sequence spans 319 residues: CBBY-like protein (319 aa).

The N-terminal 65 residues, 1–65 (MATVKISLSL…YRSSRSVGVT (65 aa)), are a transit peptide targeting the chloroplast. Asp82 (nucleophile) is an active-site residue. The Mg(2+) site is built by Asp82 and Asp84. Asp82 lines the substrate pocket. The active-site Proton donor is the Asp84. Substrate is bound by residues Glu91, 125 to 129 (GGKER), 158 to 161 (HKQK), and 198 to 204 (STSNEKA). Asp258 lines the Mg(2+) pocket.

It belongs to the HAD-like hydrolase superfamily. DOG/GPP family. It depends on Mg(2+) as a cofactor.

It is found in the plastid. The protein localises to the chloroplast. It catalyses the reaction D-xylulose 1,5-bisphosphate + H2O = D-xylulose 5-phosphate + phosphate. Highly selective xylulose-1,5-bisphosphate (XuBP) phosphatase. Also shows activity towards ribulose-1,5-bisphosphate (RuBP) and fructose-1,6-bisphosphate (FBP), but not towards fructose-6-phosphate (F6P) or ribulose-5-phosphate (Ru5P). Degrades xylulose-1,5-bisphosphate, a potent inhibitor of rubisco produced by the rubisco itself. The chain is CBBY-like protein from Arabidopsis thaliana (Mouse-ear cress).